The following is a 373-amino-acid chain: DNA replication and repair protein RecF (373 aa).

30 to 37 (GENAQGKT) contributes to the ATP binding site.

The protein belongs to the RecF family.

Its subcellular location is the cytoplasm. The RecF protein is involved in DNA metabolism; it is required for DNA replication and normal SOS inducibility. RecF binds preferentially to single-stranded, linear DNA. It also seems to bind ATP. The sequence is that of DNA replication and repair protein RecF from Limosilactobacillus fermentum (strain NBRC 3956 / LMG 18251) (Lactobacillus fermentum).